A 147-amino-acid polypeptide reads, in one-letter code: Large ribosomal subunit protein uL22c (147 aa).

The protein belongs to the universal ribosomal protein uL22 family. In terms of assembly, part of the 50S ribosomal subunit.

The protein resides in the plastid. Its subcellular location is the chloroplast. This protein binds specifically to 23S rRNA. Its function is as follows. The globular domain of the protein is located near the polypeptide exit tunnel on the outside of the subunit, while an extended beta-hairpin is found that lines the wall of the exit tunnel in the center of the 70S ribosome. In Lolium perenne (Perennial ryegrass), this protein is Large ribosomal subunit protein uL22c (rpl22).